The primary structure comprises 227 residues: UPF0173 metal-dependent hydrolase Cmaq_1073 (227 aa).

The protein belongs to the UPF0173 family.

In Caldivirga maquilingensis (strain ATCC 700844 / DSM 13496 / JCM 10307 / IC-167), this protein is UPF0173 metal-dependent hydrolase Cmaq_1073.